The following is a 60-amino-acid chain: Large ribosomal subunit protein uL30 (60 aa).

Belongs to the universal ribosomal protein uL30 family. As to quaternary structure, part of the 50S ribosomal subunit.

This Bacillus anthracis (strain A0248) protein is Large ribosomal subunit protein uL30.